The chain runs to 333 residues: T-cell surface glycoprotein CD1b (333 aa).

Positions 1–18 (MLLLPFQLLAVLFPGGNS) are cleaved as a signal peptide. Over 19–303 (EHAFQGPTSF…YWSNPTSIGS (285 aa)) the chain is Extracellular. N-linked (GlcNAc...) asparagine glycosylation is found at asparagine 38, asparagine 75, and asparagine 146. Disulfide bonds link cysteine 120–cysteine 184, cysteine 149–cysteine 163, and cysteine 224–cysteine 279. In terms of domain architecture, Ig-like spans 185 to 295 (PRYLLGVLNA…LEGQDIILYW (111 aa)). Asparagine 258 carries an N-linked (GlcNAc...) asparagine glycan. Residues 304–324 (IVLAIIVPSLLLLLCLALWYM) form a helical membrane-spanning segment. The Cytoplasmic segment spans residues 325–333 (RRRSYQNIP). The short motif at 329–332 (YQNI) is the Internalization signal element.

Heterodimer with B2M (beta-2-microglobulin). Interacts with saposin C. As to expression, expressed in lymphocytes, spleen, lung, liver, kidney and heart.

It localises to the cell membrane. The protein resides in the endosome membrane. It is found in the lysosome membrane. Its function is as follows. Antigen-presenting protein that binds self and non-self lipid and glycolipid antigens and presents them to T-cell receptors on natural killer T-cells. The chain is T-cell surface glycoprotein CD1b (CD1B) from Aotus nancymaae (Ma's night monkey).